The primary structure comprises 278 residues: Checkpoint protein HUS1B (278 aa).

The protein belongs to the HUS1 family. Interacts with RAD1 and RAD9B. As to expression, expressed strongly in testis, less in spleen, thymus, prostate, colon and leukocytes.

The chain is Checkpoint protein HUS1B (HUS1B) from Homo sapiens (Human).